The primary structure comprises 299 residues: Syntenin-1 (299 aa).

The residue at position 2 (Ser-2) is an N-acetylserine. Positions 2-103 are interaction with PDCD6IP; it reads SLYPSLEDLK…VAPVTGNDAG (102 aa). Short sequence motifs (LYPX(n)L motif) lie at residues 3-7, 46-50, and 50-54; these read LYPSL, LYPKL, and LYPEL. Ser-6 carries the post-translational modification Phosphoserine. Position 47 is a phosphotyrosine (Tyr-47). 2 PDZ domains span residues 115-194 and 199-273; these read EVIL…IRDR and TVTM…IMPT. 251-252 contacts a 1,2-diacyl-sn-glycero-3-phospho-(1D-myo-inositol-4,5-bisphosphate); it reads KD.

In terms of assembly, monomer and homodimer. Interacts with SDC1, SDC2, SDC3, SDC4, NRXN2, EPHA7, EPHB1, NF2 isoform 1, TGFA, IL5RA, NFASC, SDCBP2 and PTPRJ. Interacts with PDCD6IP. Forms a complex with PDCD6IP and SDC2. Interacts (via C-terminus) with TGFBR1. Binds to FZD7; this interaction is increased by inositol trisphosphate (IP3). Interacts with SMO. Phosphorylated on tyrosine residues.

It localises to the cell junction. The protein resides in the focal adhesion. Its subcellular location is the adherens junction. The protein localises to the cell membrane. It is found in the endoplasmic reticulum membrane. It localises to the nucleus. The protein resides in the melanosome. Its subcellular location is the cytoplasm. The protein localises to the cytosol. It is found in the cytoskeleton. It localises to the secreted. The protein resides in the extracellular exosome. Its subcellular location is the membrane raft. Its function is as follows. Multifunctional adapter protein involved in diverse array of functions including trafficking of transmembrane proteins, neuro and immunomodulation, exosome biogenesis, and tumorigenesis. Positively regulates TGFB1-mediated SMAD2/3 activation and TGFB1-induced epithelial-to-mesenchymal transition (EMT) and cell migration in various cell types. May increase TGFB1 signaling by enhancing cell-surface expression of TGFR1 by preventing the interaction between TGFR1 and CAV1 and subsequent CAV1-dependent internalization and degradation of TGFR1. In concert with SDC1/4 and PDCD6IP, regulates exosome biogenesis. Regulates migration, growth, proliferation, and cell cycle progression in a variety of cancer types. In adherens junctions may function to couple syndecans to cytoskeletal proteins or signaling components. Seems to couple transcription factor SOX4 to the IL-5 receptor (IL5RA). May also play a role in vesicular trafficking. Seems to be required for the targeting of TGFA to the cell surface in the early secretory pathway. This is Syntenin-1 (Sdcbp) from Mus musculus (Mouse).